We begin with the raw amino-acid sequence, 162 residues long: Cyclic pyranopterin monophosphate synthase (162 aa).

Substrate is bound by residues 75–77 (LCH) and 113–114 (ME). Asp-128 is an active-site residue.

It belongs to the MoaC family. As to quaternary structure, homohexamer; trimer of dimers.

The catalysed reaction is (8S)-3',8-cyclo-7,8-dihydroguanosine 5'-triphosphate = cyclic pyranopterin phosphate + diphosphate. It functions in the pathway cofactor biosynthesis; molybdopterin biosynthesis. Catalyzes the conversion of (8S)-3',8-cyclo-7,8-dihydroguanosine 5'-triphosphate to cyclic pyranopterin monophosphate (cPMP). The polypeptide is Cyclic pyranopterin monophosphate synthase (Burkholderia cenocepacia (strain HI2424)).